The sequence spans 445 residues: Nuclear hormone receptor family member nhr-1 (445 aa).

The disordered stretch occupies residues 19 to 55; that stretch reads PMVNSQRNEDPSMYMNGSAASVSHTNGSSSMGNDQKF. Positions 36 to 51 are enriched in polar residues; that stretch reads SAASVSHTNGSSSMGN. The segment at residues 70–145 is a DNA-binding region (nuclear receptor); the sequence is GELCAVCSDL…VGMDAKALQI (76 aa). NR C4-type zinc fingers lie at residues 73–93 and 109–133; these read CAVC…CNGC and CQYN…FNKC. Residues 179 to 444 form the NR LBD domain; that stretch reads QDQEIIDQLT…PFVKELCMKR (266 aa).

Belongs to the nuclear hormone receptor family.

It is found in the nucleus. Its function is as follows. Orphan nuclear receptor which acts in concert with the insulin/IGF-1-like signaling (IIS) pathway during osmotic stress, perhaps in response to a ligand modified by the sulfotransferase ssu-1. The polypeptide is Nuclear hormone receptor family member nhr-1 (nhr-1) (Caenorhabditis elegans).